We begin with the raw amino-acid sequence, 209 residues long: Putative BTB/POZ domain-containing protein At2g40450 (209 aa).

In terms of domain architecture, BTB spans 24–98 (ADVRLKAGDS…IYRVDGSICS (75 aa)).

Its pathway is protein modification; protein ubiquitination. Its function is as follows. May act as a substrate-specific adapter of an E3 ubiquitin-protein ligase complex (CUL3-RBX1-BTB) which mediates the ubiquitination and subsequent proteasomal degradation of target proteins. The chain is Putative BTB/POZ domain-containing protein At2g40450 from Arabidopsis thaliana (Mouse-ear cress).